The following is a 203-amino-acid chain: Putative zinc finger protein 876 (203 aa).

4 C2H2-type zinc fingers span residues 63 to 85 (YTCEECGKAFYRSSHLTEHKNIH), 91 to 113 (YKCEECGNAFYRSSHLTKHKRIH), 119 to 141 (YKCEECGKAFRQSSALNEHKKIH), and 147 to 169 (YKCKECGKAFRWSRSLNEHTNIH). The segment at 175–197 (YTCEECGKDFTWSSTLTVHQRIQ) adopts a C2H2-type 5; degenerate zinc-finger fold.

It belongs to the krueppel C2H2-type zinc-finger protein family.

It is found in the nucleus. Its function is as follows. May be involved in transcriptional regulation. This Homo sapiens (Human) protein is Putative zinc finger protein 876 (ZNF876P).